We begin with the raw amino-acid sequence, 285 residues long: Purine biosynthesis transcriptional repressor PurR (285 aa).

The tract at residues 1-73 is DNA binding domain; it reads MKFRRSGRLV…GAAGGVKYIP (73 aa). The tract at residues 74–285 is effector binding domain; that stretch reads KMKQAEAEEF…NLLKNGETES (212 aa). Y102 serves as a coordination point for guanosine 3',5'-bis(diphosphate). 5-phospho-alpha-D-ribose 1-diphosphate-binding residues include A138, T139, K140, and R160. The guanosine 3',5'-bis(diphosphate) site is built by G178 and S179. 5-phospho-alpha-D-ribose 1-diphosphate contacts are provided by D203, D204, F205, K207, and A208. K207 contributes to the guanosine 3',5'-bis(diphosphate) binding site. Guanosine 3',5'-bis(diphosphate)-binding residues include G209, G210, and T211. A 5-phospho-alpha-D-ribose 1-diphosphate-binding site is contributed by T211.

It belongs to the purine/pyrimidine phosphoribosyltransferase family. PurR subfamily. In terms of assembly, homodimer.

Its activity is regulated as follows. The binding of PurR to DNA, and therefore the repressor activity, is influenced by interaction with the effector molecules 5-phosphoribosyl 1-pyrophosphate (PRPP) and (p)ppGpp. PRPP binds to PurR and reduces affinity of PurR for DNA, which inhibits the repressor activity and induces transcription of the target genes. On the contrary, (p)ppGpp enhances binding of PurR to DNA and repression of the transcription. PRPP and (p)ppGpp compete for PurR binding and allosteric control of transcription. ppGpp maintains PurR-DNA interaction and prevents PRPP from de-repressing PurR regulation during conditions that lead to (p)ppGpp induction, such as upon amino acid starvation. Its function is as follows. DNA-binding transcriptional repressor that controls the expression of a number of genes involved in the synthesis, metabolism and transport of purines. In response to a signal of excess adenine, represses the transcription of the pur operon, which encodes enzymes of the purine biosynthetic pathway. It also represses the expression of the purA and purR genes. In addition, controls the expression of several other genes or operons, which encode enzymes or transporters playing a role in purine nucleotide metabolism. Acts by binding directly to specific DNA sequences, named PurBoxes, in the upstream control regions of affected genes. Two PurBoxes are required for high-affinity PurR binding. Also responds to amino acid starvation via (p)ppGpp, which strongly increases PurR activity and repression of purine nucleotide biosynthesis genes. This Bacillus subtilis (strain 168) protein is Purine biosynthesis transcriptional repressor PurR.